A 337-amino-acid chain; its full sequence is Phenylalanine--tRNA ligase alpha subunit (337 aa).

Glu252 lines the Mg(2+) pocket.

The protein belongs to the class-II aminoacyl-tRNA synthetase family. Phe-tRNA synthetase alpha subunit type 1 subfamily. As to quaternary structure, tetramer of two alpha and two beta subunits. Mg(2+) is required as a cofactor.

It localises to the cytoplasm. The catalysed reaction is tRNA(Phe) + L-phenylalanine + ATP = L-phenylalanyl-tRNA(Phe) + AMP + diphosphate + H(+). The polypeptide is Phenylalanine--tRNA ligase alpha subunit (Francisella tularensis subsp. novicida (strain U112)).